We begin with the raw amino-acid sequence, 413 residues long: Serine/threonine transporter SstT (413 aa).

9 helical membrane passes run 21 to 41 (IGLL…SALG), 61 to 81 (SVAP…KKVG), 89 to 109 (IIYL…FASF), 146 to 166 (ITAL…GLGI), 189 to 209 (IVHF…ASTL), 224 to 244 (LAVL…IIVF), 305 to 325 (MGGA…TLGI), 337 to 357 (LVAS…LLLI), and 363 to 383 (LFGI…IIGV).

This sequence belongs to the dicarboxylate/amino acid:cation symporter (DAACS) (TC 2.A.23) family.

The protein localises to the cell inner membrane. The enzyme catalyses L-serine(in) + Na(+)(in) = L-serine(out) + Na(+)(out). It catalyses the reaction L-threonine(in) + Na(+)(in) = L-threonine(out) + Na(+)(out). In terms of biological role, involved in the import of serine and threonine into the cell, with the concomitant import of sodium (symport system). The polypeptide is Serine/threonine transporter SstT (Mannheimia succiniciproducens (strain KCTC 0769BP / MBEL55E)).